The sequence spans 193 residues: Acyl carrier protein phosphodiesterase (193 aa).

It belongs to the AcpH family.

The catalysed reaction is holo-[ACP] + H2O = apo-[ACP] + (R)-4'-phosphopantetheine + H(+). Functionally, converts holo-ACP to apo-ACP by hydrolytic cleavage of the phosphopantetheine prosthetic group from ACP. The polypeptide is Acyl carrier protein phosphodiesterase (Salmonella paratyphi A (strain ATCC 9150 / SARB42)).